Here is a 443-residue protein sequence, read N- to C-terminus: MAQFFKAKPNQAKKLSQKIALKVQRLDHLGAGIAEHQGKVVFIPGALPGETVEVQLTEQKKNYARAKLQRVSEASPDRQTPPCPWYGKCGGCDLQHLSLPRQLEYKRQALGDIVSRSAAQTVTVNTDEVSGDSWHYRRRARLATLLDKETNQLALGFREEGSKSVVGIDSCAVLARPLSELISPFATLLNRLKGKQRLGHLELTQAANGLFAVLRVTAPLAQSDKKLLSAFADERQIALLLQGNEGELEFLSSGHELPYYQLDGLKLAFAPGNFIQVNGEVNQAMVAQAMNWLDVHAGERVLDLFCGVGNFSLPLAKQGAEVVGVEGVPEMVAQAKQNAAINGLDNLSFYCADLSEDLAAEPWLGKIDKLLLDPARAGAYESLKWLKKMKPAKVLYVSCNPASLARDSVLLFEAGYQLTRLGLVDMFPQTHHSEGMALFELVN.

In terms of domain architecture, TRAM spans 12 to 70 (AKKLSQKIALKVQRLDHLGAGIAEHQGKVVFIPGALPGETVEVQLTEQKKNYARAKLQR). 4 residues coordinate [4Fe-4S] cluster: C83, C89, C92, and C171. Q276, F305, N310, E326, D353, and D373 together coordinate S-adenosyl-L-methionine. The active-site Nucleophile is the C399.

Belongs to the class I-like SAM-binding methyltransferase superfamily. RNA M5U methyltransferase family. RlmD subfamily.

The enzyme catalyses uridine(1939) in 23S rRNA + S-adenosyl-L-methionine = 5-methyluridine(1939) in 23S rRNA + S-adenosyl-L-homocysteine + H(+). Functionally, catalyzes the formation of 5-methyl-uridine at position 1939 (m5U1939) in 23S rRNA. In Shewanella amazonensis (strain ATCC BAA-1098 / SB2B), this protein is 23S rRNA (uracil(1939)-C(5))-methyltransferase RlmD.